The primary structure comprises 232 residues: tRNA-uridine aminocarboxypropyltransferase (232 aa).

4 residues coordinate Zn(2+): Cys-31, Cys-34, Cys-41, and Cys-43. The short motif at 137–140 (DGTW) is the DXTW element.

This sequence belongs to the TDD superfamily. DTWD2 family. TapT subfamily. In terms of assembly, monomer in solution.

The catalysed reaction is a uridine in tRNA + S-adenosyl-L-methionine = a 3-[(3S)-3-amino-3-carboxypropyl]uridine in tRNA + S-methyl-5'-thioadenosine + H(+). It carries out the reaction uridine(47) in tRNA(Phe) + S-adenosyl-L-methionine = 3-[(3S)-3-amino-3-carboxypropyl]uridine(47) in tRNA(Phe) + S-methyl-5'-thioadenosine + H(+). The degree of the acp3U modification at U47 is dependent on the presence of the m7G modification at the preceding nucleotide G46. It also depends on medium conditions. Catalyzes the formation of 3-(3-amino-3-carboxypropyl)uridine (acp3U) at position 47 of tRNAs. Acp3U47 confers thermal stability on tRNA. The protein is tRNA-uridine aminocarboxypropyltransferase of Escherichia coli (strain K12).